A 1130-amino-acid chain; its full sequence is MKWVKSGVGILGILLIICHAVTSQRRILDITDNLKITFKTISNFGPRAQSIQNVTIENVGIKDIPDFGWRCYFCHDQLLFPGTFNLARSQYFLRPILDNYVVLSDGFLLEFIKGCMYRITPIPRNAPIKTRDKREFTLLAEQFSVSKYDSFPNWYCETISGGNTEVANIRSTENLKYVEDFDSSYNWFRIPHDFRSVPLQPQDRYSANHKASSVEECKYKVIPTPVKASVRKVQRNFGTTVYYGTTDTSIRGKLFKVAEKLALKHKLGLVEMTPGQPVNNGISLVVTGNYIERNIPSPDEAYRLSVSADLISIEAPALPGLINGIETMHSLSAWDMALPYGGVKDFPRFPFRGIFLDIASNFPGYNYMMKFLTVMAQYKLNKLVLPLYNNEGFRLELNDSPGYEFQALHLVGGNRCHDLKEENCLFSQLGSFAGNSDGYLTKGDMVDLIKTADLLNIEIIMSLNIGESARGAIVPLKTSKHNRLLYDPEDTDFVDRFYPQKDSSMNPCREETMIFYDHMLKQLKAIYKAASVPLKTIMIGSKVNFDQVLNSKYCYPKNLNSTQRLMERENLERNINGFKLNFTKRLVKTAHDNGINEVMAIDDVFTTEFDAAGNTPNTVYDTVDSETNKTRFNATVTAVHSRYDTVRDERLWKRGDRFAELGYKVIISPPILDFNYAVEPDPDRPGDYDSVIRNISFSKLFRFVPDSHCCNIPNAIQHDCALESDCTTAGPPDSYIGTLGKLDTRKLRSLKDWNELLFPRLLIFAERSWHKSSWEDSFEPHRVRMNNITRQIITNYTVPNWNDIIQEESKVLGCISRKEKLRLMHEDGLKPYVEPPGARLLGGNTMRIAASTTEDSFWVQASVNGNPWTDNVKVLDVNPTDSVRLRTVHPAKAELRSKEVKLNLTSLPTPREQFRKIAQDALSRRIGIDIQRARMPPMPVNPTYRPPVPLPSFDPADDRAPDLAAIAAAHPPPLPPGMPPHMMPNMPFPPRPPFVPPLLPPGQMRALGQQAGQALRGQGQQTGQQTLPAQPRGPMGLTGQAAGTGVAGQSGQQPSAAGQGTQQGLPGQQRTGVVPGQWPFFPGMPAAQFPPMFNPQMQRALQMRGQGQIPQTQGAVAGAGQSRVPQQQAG.

The N-terminal stretch at 1–23 is a signal peptide; the sequence is MKWVKSGVGILGILLIICHAVTS. 2 stretches are compositionally biased toward low complexity: residues 1001-1030 and 1037-1072; these read PGQM…LPAQ and LTGQ…QRTG. Disordered regions lie at residues 1001–1075 and 1102–1130; these read PGQM…GVVP and QMRG…QQAG.

This sequence belongs to the glycosyl hydrolase 20 family. In terms of tissue distribution, prismatic layer of shell (at protein level). Expressed primarily in the mantle with highest level in the mantle edge and lower level in the mantle pallium.

The protein resides in the secreted. The enzyme catalyses Hydrolysis of terminal non-reducing N-acetyl-D-hexosamine residues in N-acetyl-beta-D-hexosaminides.. It participates in glycan degradation; chitin degradation. The chain is Putative beta-hexosaminidase from Pinctada maxima (Silver-lipped pearl oyster).